The primary structure comprises 152 residues: Ribonuclease H (152 aa).

The RNase H type-1 domain maps to 6–147 (KKNNVIAYTD…ADELANKAIA (142 aa)). Aspartate 15, glutamate 53, aspartate 75, and aspartate 139 together coordinate Mg(2+).

It belongs to the RNase H family. As to quaternary structure, monomer. It depends on Mg(2+) as a cofactor.

It localises to the cytoplasm. It catalyses the reaction Endonucleolytic cleavage to 5'-phosphomonoester.. Its function is as follows. Endonuclease that specifically degrades the RNA of RNA-DNA hybrids. This is Ribonuclease H from Francisella philomiragia subsp. philomiragia (strain ATCC 25017 / CCUG 19701 / FSC 153 / O#319-036).